The sequence spans 673 residues: DNA ligase (673 aa).

NAD(+) contacts are provided by residues 34-38 (DAEYD), 83-84 (SL), and Glu116. Lys118 acts as the N6-AMP-lysine intermediate in catalysis. Positions 139, 176, 293, and 317 each coordinate NAD(+). Residues Cys411, Cys414, Cys429, and Cys435 each contribute to the Zn(2+) site. Residues 595–673 (NQQNPFFGKT…EDEFLKWVNS (79 aa)) enclose the BRCT domain.

The protein belongs to the NAD-dependent DNA ligase family. LigA subfamily. The cofactor is Mg(2+). Requires Mn(2+) as cofactor.

It catalyses the reaction NAD(+) + (deoxyribonucleotide)n-3'-hydroxyl + 5'-phospho-(deoxyribonucleotide)m = (deoxyribonucleotide)n+m + AMP + beta-nicotinamide D-nucleotide.. Its function is as follows. DNA ligase that catalyzes the formation of phosphodiester linkages between 5'-phosphoryl and 3'-hydroxyl groups in double-stranded DNA using NAD as a coenzyme and as the energy source for the reaction. It is essential for DNA replication and repair of damaged DNA. The sequence is that of DNA ligase from Legionella pneumophila (strain Lens).